The following is a 539-amino-acid chain: Histone-arginine methyltransferase CARMER (539 aa).

One can recognise an SAM-dependent MTase PRMT-type domain in the interval 149 to 458; sequence ASQYFQFYGY…QSYDVTIDLH (310 aa). Q162, R171, G195, E217, E246, and T274 together coordinate S-adenosyl-L-methionine. R509 carries the asymmetric dimethylarginine; by autocatalysis modification.

This sequence belongs to the class I-like SAM-binding methyltransferase superfamily. Protein arginine N-methyltransferase family. As to quaternary structure, homodimer. The dimethylated protein is the major form.

It is found in the cytoplasm. The protein resides in the nucleus. It catalyses the reaction L-arginyl-[protein] + 2 S-adenosyl-L-methionine = N(omega),N(omega)-dimethyl-L-arginyl-[protein] + 2 S-adenosyl-L-homocysteine + 2 H(+). Methylates (mono- and asymmetric dimethylation) the guanidino nitrogens of arginyl residues in proteins. May methylate histone H3 at 'Arg-17' and activate transcription via chromatin remodeling. This chain is Histone-arginine methyltransferase CARMER (Art4), found in Drosophila mojavensis (Fruit fly).